Consider the following 134-residue polypeptide: 4-carboxymuconolactone decarboxylase (134 aa).

The protein belongs to the carboxymuconolactone decarboxylase family.

It carries out the reaction (R)-2-(carboxymethyl)-5-oxo-2,5-dihydro-2-furoate + H(+) = (4,5-dihydro-5-oxofuran-2-yl)-acetate + CO2. It participates in aromatic compound metabolism; beta-ketoadipate pathway; 5-oxo-4,5-dihydro-2-furylacetate from 3-carboxy-cis,cis-muconate: step 2/2. This chain is 4-carboxymuconolactone decarboxylase (pcaC), found in Acinetobacter baylyi (strain ATCC 33305 / BD413 / ADP1).